We begin with the raw amino-acid sequence, 179 residues long: ATP-dependent protease subunit HslV (179 aa).

T8 is an active-site residue. Na(+)-binding residues include S164, C167, and T170.

This sequence belongs to the peptidase T1B family. HslV subfamily. A double ring-shaped homohexamer of HslV is capped on each side by a ring-shaped HslU homohexamer. The assembly of the HslU/HslV complex is dependent on binding of ATP.

It localises to the cytoplasm. The catalysed reaction is ATP-dependent cleavage of peptide bonds with broad specificity.. Allosterically activated by HslU binding. Protease subunit of a proteasome-like degradation complex believed to be a general protein degrading machinery. The chain is ATP-dependent protease subunit HslV from Staphylococcus carnosus (strain TM300).